Reading from the N-terminus, the 260-residue chain is Carbonic anhydrase 2 (260 aa).

In terms of domain architecture, Alpha-carbonic anhydrase spans 3–259 (HGWGYADHNG…LKDRKVCASF (257 aa)). Residue His64 is the Proton donor/acceptor of the active site. Zn(2+) is bound by residues His94, His96, and His119. Position 198-199 (198-199 (TT)) interacts with substrate.

This sequence belongs to the alpha-carbonic anhydrase family. Zn(2+) is required as a cofactor.

It is found in the cytoplasm. It catalyses the reaction hydrogencarbonate + H(+) = CO2 + H2O. Its function is as follows. Catalyzes the reversible hydration of carbon dioxide. In Pseudaspius hakonensis (Big-scaled redfin), this protein is Carbonic anhydrase 2 (ca2).